A 554-amino-acid chain; its full sequence is 2-succinyl-5-enolpyruvyl-6-hydroxy-3-cyclohexene-1-carboxylate synthase (554 aa).

The protein belongs to the TPP enzyme family. MenD subfamily. Homodimer. It depends on Mg(2+) as a cofactor. Mn(2+) is required as a cofactor. Requires thiamine diphosphate as cofactor.

The enzyme catalyses isochorismate + 2-oxoglutarate + H(+) = 5-enolpyruvoyl-6-hydroxy-2-succinyl-cyclohex-3-ene-1-carboxylate + CO2. It functions in the pathway quinol/quinone metabolism; 1,4-dihydroxy-2-naphthoate biosynthesis; 1,4-dihydroxy-2-naphthoate from chorismate: step 2/7. The protein operates within quinol/quinone metabolism; menaquinone biosynthesis. Functionally, catalyzes the thiamine diphosphate-dependent decarboxylation of 2-oxoglutarate and the subsequent addition of the resulting succinic semialdehyde-thiamine pyrophosphate anion to isochorismate to yield 2-succinyl-5-enolpyruvyl-6-hydroxy-3-cyclohexene-1-carboxylate (SEPHCHC). The polypeptide is 2-succinyl-5-enolpyruvyl-6-hydroxy-3-cyclohexene-1-carboxylate synthase (Mycobacterium tuberculosis (strain ATCC 25177 / H37Ra)).